The primary structure comprises 349 residues: Isopentenyl-diphosphate delta-isomerase (349 aa).

Substrate is bound at residue 9–10 (RK). FMN is bound by residues 65-67 (AMT), Ser-95, and Asn-124. 95–97 (STH) is a binding site for substrate. Position 154 (Gln-154) interacts with substrate. Glu-155 is a Mg(2+) binding site. Residues Lys-186, Ser-211, Thr-216, 262–264 (GLR), and 283–284 (SR) each bind FMN.

The protein belongs to the IPP isomerase type 2 family. Homooctamer. Dimer of tetramers. FMN serves as cofactor. It depends on NADPH as a cofactor. Mg(2+) is required as a cofactor.

The protein localises to the cytoplasm. The enzyme catalyses isopentenyl diphosphate = dimethylallyl diphosphate. Its function is as follows. Involved in the biosynthesis of isoprenoids. Catalyzes the 1,3-allylic rearrangement of the homoallylic substrate isopentenyl (IPP) to its allylic isomer, dimethylallyl diphosphate (DMAPP). This chain is Isopentenyl-diphosphate delta-isomerase, found in Staphylococcus aureus (strain N315).